Reading from the N-terminus, the 470-residue chain is Membrane-bound lytic murein transglycosylase F (470 aa).

A signal peptide spans 1–24 (MPSLKTKGAAGKFASLLLVLALSA). The non-LT domain stretch occupies residues 25–262 (CSRPAPPPET…RALERYFGHV (238 aa)). The segment at 263-470 (KRLGSSDILG…RGEDGLPPPG (208 aa)) is LT domain. Residue Glu309 is part of the active site.

The protein in the N-terminal section; belongs to the bacterial solute-binding protein 3 family. In the C-terminal section; belongs to the transglycosylase Slt family.

Its subcellular location is the cell outer membrane. The enzyme catalyses Exolytic cleavage of the (1-&gt;4)-beta-glycosidic linkage between N-acetylmuramic acid (MurNAc) and N-acetylglucosamine (GlcNAc) residues in peptidoglycan, from either the reducing or the non-reducing ends of the peptidoglycan chains, with concomitant formation of a 1,6-anhydrobond in the MurNAc residue.. Its function is as follows. Murein-degrading enzyme that degrades murein glycan strands and insoluble, high-molecular weight murein sacculi, with the concomitant formation of a 1,6-anhydromuramoyl product. Lytic transglycosylases (LTs) play an integral role in the metabolism of the peptidoglycan (PG) sacculus. Their lytic action creates space within the PG sacculus to allow for its expansion as well as for the insertion of various structures such as secretion systems and flagella. In Thiobacillus denitrificans (strain ATCC 25259 / T1), this protein is Membrane-bound lytic murein transglycosylase F.